The primary structure comprises 504 residues: Beta-glucosidase 24 (504 aa).

The signal sequence occupies residues 1–18 (MELLWLLLLLLMASSTSS). Residue glutamine 47 participates in a beta-D-glucoside binding. Residue asparagine 75 is glycosylated (N-linked (GlcNAc...) asparagine). A beta-D-glucoside-binding positions include histidine 151 and 196–197 (NE). Glutamate 197 serves as the catalytic Proton donor. Cysteines 216 and 224 form a disulfide. Asparagine 329 is a glycosylation site (N-linked (GlcNAc...) asparagine). Tyrosine 340 contributes to the a beta-D-glucoside binding site. Asparagine 371 carries an N-linked (GlcNAc...) asparagine glycan. Glutamate 411 contacts a beta-D-glucoside. Residue glutamate 411 is the Nucleophile of the active site. The N-linked (GlcNAc...) asparagine glycan is linked to asparagine 421. A beta-D-glucoside is bound by residues tryptophan 460, 467–468 (EW), and phenylalanine 476.

Belongs to the glycosyl hydrolase 1 family.

The enzyme catalyses Hydrolysis of terminal, non-reducing beta-D-glucosyl residues with release of beta-D-glucose.. In Oryza sativa subsp. japonica (Rice), this protein is Beta-glucosidase 24 (BGLU24).